Here is a 374-residue protein sequence, read N- to C-terminus: Spore germination protein B3 (374 aa).

Positions 1-19 are cleaved as a signal peptide; the sequence is MKTASKFSVMFFMLLALCG. The N-palmitoyl cysteine moiety is linked to residue Cys-20. Cys-20 is lipidated: S-diacylglycerol cysteine.

It belongs to the GerABKC lipoprotein family.

The protein localises to the cell membrane. Involved in the response to the germinative mixture of L-asparagine, glucose, fructose and potassium ions (AGFK). Cannot stimulate germination in the absence of gerD and gerK gene products (fructose and glucose receptors respectively). This chain is Spore germination protein B3 (gerBC), found in Bacillus subtilis (strain 168).